We begin with the raw amino-acid sequence, 111 residues long: Ribonuclease P protein component (111 aa).

This sequence belongs to the RnpA family. As to quaternary structure, consists of a catalytic RNA component (M1 or rnpB) and a protein subunit.

It catalyses the reaction Endonucleolytic cleavage of RNA, removing 5'-extranucleotides from tRNA precursor.. In terms of biological role, RNaseP catalyzes the removal of the 5'-leader sequence from pre-tRNA to produce the mature 5'-terminus. It can also cleave other RNA substrates such as 4.5S RNA. The protein component plays an auxiliary but essential role in vivo by binding to the 5'-leader sequence and broadening the substrate specificity of the ribozyme. This is Ribonuclease P protein component from Clostridium botulinum (strain 657 / Type Ba4).